Reading from the N-terminus, the 49-residue chain is uncharacterized protein (49 aa).

An N-terminal signal peptide occupies residues 1–22 (MVFLLFLSFVLSSIFLVPLVYM).

Its subcellular location is the secreted. This is an uncharacterized protein from Dictyostelium discoideum (Social amoeba).